The primary structure comprises 58 residues: UPF0391 membrane protein Sbal195_1447 (58 aa).

The next 2 helical transmembrane spans lie at L6–A26 and A28–V48.

The protein belongs to the UPF0391 family.

Its subcellular location is the cell membrane. This is UPF0391 membrane protein Sbal195_1447 from Shewanella baltica (strain OS195).